We begin with the raw amino-acid sequence, 231 residues long: Ribonuclease P protein component 3 (231 aa).

It belongs to the eukaryotic/archaeal RNase P protein component 3 family. In terms of assembly, consists of a catalytic RNA component and at least 4-5 protein subunits.

It localises to the cytoplasm. The enzyme catalyses Endonucleolytic cleavage of RNA, removing 5'-extranucleotides from tRNA precursor.. Functionally, part of ribonuclease P, a protein complex that generates mature tRNA molecules by cleaving their 5'-ends. This chain is Ribonuclease P protein component 3, found in Methanococcus maripaludis (strain C5 / ATCC BAA-1333).